The sequence spans 405 residues: 4-hydroxy-3-methylbut-2-en-1-yl diphosphate synthase (flavodoxin) (405 aa).

[4Fe-4S] cluster-binding residues include Cys297, Cys300, Cys343, and Glu350.

Belongs to the IspG family. It depends on [4Fe-4S] cluster as a cofactor.

The catalysed reaction is (2E)-4-hydroxy-3-methylbut-2-enyl diphosphate + oxidized [flavodoxin] + H2O + 2 H(+) = 2-C-methyl-D-erythritol 2,4-cyclic diphosphate + reduced [flavodoxin]. Its pathway is isoprenoid biosynthesis; isopentenyl diphosphate biosynthesis via DXP pathway; isopentenyl diphosphate from 1-deoxy-D-xylulose 5-phosphate: step 5/6. Converts 2C-methyl-D-erythritol 2,4-cyclodiphosphate (ME-2,4cPP) into 1-hydroxy-2-methyl-2-(E)-butenyl 4-diphosphate. In Francisella tularensis subsp. tularensis (strain FSC 198), this protein is 4-hydroxy-3-methylbut-2-en-1-yl diphosphate synthase (flavodoxin).